The chain runs to 159 residues: Ribonuclease H (159 aa).

The 142-residue stretch at M1 to Q142 folds into the RNase H type-1 domain. Mg(2+)-binding residues include D10, E48, D70, and D134. The disordered stretch occupies residues E135–T159. Over residues T145–T159 the composition is skewed to basic and acidic residues.

It belongs to the RNase H family. In terms of assembly, monomer. Mg(2+) is required as a cofactor.

The protein localises to the cytoplasm. The catalysed reaction is Endonucleolytic cleavage to 5'-phosphomonoester.. Functionally, endonuclease that specifically degrades the RNA of RNA-DNA hybrids. This Proteus mirabilis (strain HI4320) protein is Ribonuclease H.